The following is a 1142-amino-acid chain: Desmoglein-2.1 (1142 aa).

An N-terminal signal peptide occupies residues 1–18 (MARRISPVVAFLLCFGLS). Residues 19–38 (HFFEAEARLQHSVALHRQKR) constitute a propeptide that is removed on maturation. Residues 39–643 (EWIVPPQILE…AKKGSRLGPA (605 aa)) lie on the Extracellular side of the membrane. 4 Cadherin domains span residues 64 to 148 (SDKE…APVF), 156 to 258 (VDEL…VPTL), 259 to 416 (GGPY…GPKF), and 417 to 527 (FPGT…CPTL). Asn115 carries N-linked (GlcNAc...) asparagine glycosylation. A disordered region spans residues 369 to 389 (SGAAGGAGAMGGASGSGGGTG). 2 N-linked (GlcNAc...) asparagine glycosylation sites follow: Asn490 and Asn576. The helical transmembrane segment at 644–664 (GIGLLLLALLALLLIPLLLLL) threads the bilayer. Residues 665 to 1142 (CTCGMTGAFT…RKVVTTQSVK (478 aa)) are Cytoplasmic-facing. Desmoglein repeat repeat units follow at residues 948-974 (VEQQ…NSGP), 975-998 (VAEG…ERMV), 999-1039 (LVFR…VLQG), and 1040-1071 (TIQR…NGIS).

The protein resides in the cell junction. It is found in the desmosome. It localises to the cell membrane. The protein localises to the cytoplasm. In terms of biological role, a component of desmosome cell-cell junctions which are required for positive regulation of cellular adhesion. Involved in the interaction of plaque proteins and intermediate filaments mediating cell-cell adhesion. Required for embryogenesis, specifically for progression of epiboly and normal convergence-extension movements during gastrulation. The chain is Desmoglein-2.1 from Danio rerio (Zebrafish).